Here is a 341-residue protein sequence, read N- to C-terminus: Protein DOWNY MILDEW RESISTANCE 6 (341 aa).

The 101-residue stretch at 188-288 (QGQHMAVNYY…RLSVASFLCP (101 aa)) folds into the Fe2OG dioxygenase domain. H212, D214, and H269 together coordinate Fe cation. 2-oxoglutarate is bound at residue R279.

This sequence belongs to the iron/ascorbate-dependent oxidoreductase family. Fe(2+) serves as cofactor.

It carries out the reaction salicylate + NADH + O2 + H(+) = 2,3-dihydroxybenzoate + NAD(+) + H2O. Converts salicylic acid (SA) to 2,3-dihydroxybenzoic acid (2,3-DHBA). Suppressor of immunity. Regulates negatively defense associated genes expression (e.g. PR-1, PR-2, and PR-5). Negative regulator of defense against Hyaloperonospora arabidopsidis. Its function is as follows. (Microbial infection) Required for susceptibility to the downy mildew pathogen Hyaloperonospora arabidopsidis. In terms of biological role, (Microbial infection) Required for susceptibility to Pseudomonas syringae pv. tomato DC3000. Functionally, (Microbial infection) Required for susceptibility to the oomycete Phytophthora capsici. The protein is Protein DOWNY MILDEW RESISTANCE 6 of Arabidopsis thaliana (Mouse-ear cress).